The following is a 296-amino-acid chain: Cell division protein DivIB (296 aa).

Over 1–25 (MMEDKIIHTPRFDEQRRMRRKKRQR) the chain is Cytoplasmic. A helical membrane pass occupies residues 26–46 (LQLFIFLSIVAIVSLILIYMF). Residues 47 to 296 (TSISYVKKIS…KELNQVKKNS (250 aa)) are Extracellular-facing. Positions 50 to 118 (SYVKKISVND…NTVSINVEEY (69 aa)) constitute a POTRA domain.

This sequence belongs to the FtsQ/DivIB family. DivIB subfamily.

The protein resides in the cell membrane. Its function is as follows. Cell division protein that may be involved in stabilizing or promoting the assembly of the division complex. In Macrococcus caseolyticus (strain JCSC5402) (Macrococcoides caseolyticum), this protein is Cell division protein DivIB.